A 609-amino-acid polypeptide reads, in one-letter code: UvrABC system protein C (609 aa).

The region spanning 16–94 is the GIY-YIG domain; that stretch reads SSAGVYRMYD…IKQYMPKYNV (79 aa). The 36-residue stretch at 203-238 folds into the UVR domain; it reads QQVISALVDKMELAAERQAYEQAARFRDQIMALRKV.

Belongs to the UvrC family. As to quaternary structure, interacts with UvrB in an incision complex.

It localises to the cytoplasm. Its function is as follows. The UvrABC repair system catalyzes the recognition and processing of DNA lesions. UvrC both incises the 5' and 3' sides of the lesion. The N-terminal half is responsible for the 3' incision and the C-terminal half is responsible for the 5' incision. The polypeptide is UvrABC system protein C (Shewanella baltica (strain OS185)).